The following is a 203-amino-acid chain: Protein GrpE (203 aa).

The segment covering 1-10 (MSNESIKAEQ) has biased composition (basic and acidic residues). The interval 1 to 20 (MSNESIKAEQDLIQEGVESE) is disordered.

The protein belongs to the GrpE family. In terms of assembly, homodimer.

Its subcellular location is the cytoplasm. Functionally, participates actively in the response to hyperosmotic and heat shock by preventing the aggregation of stress-denatured proteins, in association with DnaK and GrpE. It is the nucleotide exchange factor for DnaK and may function as a thermosensor. Unfolded proteins bind initially to DnaJ; upon interaction with the DnaJ-bound protein, DnaK hydrolyzes its bound ATP, resulting in the formation of a stable complex. GrpE releases ADP from DnaK; ATP binding to DnaK triggers the release of the substrate protein, thus completing the reaction cycle. Several rounds of ATP-dependent interactions between DnaJ, DnaK and GrpE are required for fully efficient folding. This Shewanella sp. (strain MR-7) protein is Protein GrpE.